A 336-amino-acid chain; its full sequence is Tryptophan--tRNA ligase 1 (336 aa).

Residues 9–11 (KPT) and 17–18 (GN) each bind ATP. The short motif at 10-18 (PTGHLTLGN) is the 'HIGH' region element. Residue Asp-137 participates in L-tryptophan binding. ATP contacts are provided by residues 149–151 (GED), Val-188, and 197–201 (KMGKS). The 'KMSKS' region signature appears at 197–201 (KMGKS).

It belongs to the class-I aminoacyl-tRNA synthetase family. As to quaternary structure, homodimer.

The protein localises to the cytoplasm. It catalyses the reaction tRNA(Trp) + L-tryptophan + ATP = L-tryptophyl-tRNA(Trp) + AMP + diphosphate + H(+). Catalyzes the attachment of tryptophan to tRNA(Trp). This Streptomyces coelicolor (strain ATCC BAA-471 / A3(2) / M145) protein is Tryptophan--tRNA ligase 1.